Consider the following 506-residue polypeptide: MKILASSTNYVLHNRLSNSQYEDARSKIVNFGGEFTNDAAKADYIFVNYSQINRVRRELRTIGTPLETCVSCKLIVKIDWLNEPKESLTPGNPYVIWHRKPEMKVGSPYTPSTRPASHTEAPNDFENHETPNTENNNEVKSIDNVDQEGSVYPTTKEYPYVLEIPRYACQRKTPLKCVNQAFVNALSVLKTCREVNGESVRTRAYGMAIATIKAFPLPIDSAEQLEKMPGCGPKIVHLWKEFASTGTLKEAEEFQKDPASKILLLFYNIFGVGASHAAEWYQKGWRTIEQVRKHKDSFTKQIKVGLEFYEDFCKTVTIEEATEIYETIVSRMPDGIKIQSCLVGGFRRGKPVGADVDMVLSPSHTHSTKHLVDVLLRILDEEFQFRLISVQEHSCGGKKGYVMLAVILSNSSKINRRVDIIVVPPAYIGSAVLGWSGGIFFLRDLKLYANSHLGLSYDSFEIINLKTGKDICPDEFNEWKDPVEAEKDIFRYFSLEYIEPKFRNTG.

Residues 1–98 (MKILASSTNY…TPGNPYVIWH (98 aa)) form the BRCT domain. Residues 106-150 (GSPYTPSTRPASHTEAPNDFENHETPNTENNNEVKSIDNVDQEGS) form a disordered region. Residues 348-357 (RGKPVGADVD) are involved in ssDNA binding. 3 residues coordinate Mg(2+): aspartate 355, aspartate 357, and aspartate 419.

Belongs to the DNA polymerase type-X family. Requires Mg(2+) as cofactor.

It localises to the cytoplasm. Its subcellular location is the nucleus. The catalysed reaction is DNA(n) + a 2'-deoxyribonucleoside 5'-triphosphate = DNA(n+1) + diphosphate. Functionally, repair polymerase. Involved in gap-filling in DNA non-homologous end joining (NHEJ) required for double-strand break repair. Can incorporate a ribonucleotide (rNTP) into a primer DNA. The protein is DNA polymerase type-X family protein pol4 (pol4) of Schizosaccharomyces pombe (strain 972 / ATCC 24843) (Fission yeast).